Consider the following 383-residue polypeptide: Acetylornithine deacetylase (383 aa).

His80 is a Zn(2+) binding site. Asp82 is an active-site residue. Asp112 contributes to the Zn(2+) binding site. The active site involves Glu144. Zn(2+) is bound by residues Glu145, Glu169, and His355.

The protein belongs to the peptidase M20A family. ArgE subfamily. As to quaternary structure, homodimer. It depends on Zn(2+) as a cofactor. Co(2+) serves as cofactor. Glutathione is required as a cofactor.

It is found in the cytoplasm. The enzyme catalyses N(2)-acetyl-L-ornithine + H2O = L-ornithine + acetate. It functions in the pathway amino-acid biosynthesis; L-arginine biosynthesis; L-ornithine from N(2)-acetyl-L-ornithine (linear): step 1/1. Functionally, catalyzes the hydrolysis of the amide bond of N(2)-acetylated L-amino acids. Cleaves the acetyl group from N-acetyl-L-ornithine to form L-ornithine, an intermediate in L-arginine biosynthesis pathway, and a branchpoint in the synthesis of polyamines. The sequence is that of Acetylornithine deacetylase from Shigella dysenteriae serotype 1 (strain Sd197).